Consider the following 78-residue polypeptide: uncharacterized protein (78 aa).

Residues 13–33 (STILILLMSVLILLLSIDILA) traverse the membrane as a helical segment.

Its subcellular location is the membrane. This is an uncharacterized protein from Methanocaldococcus jannaschii (strain ATCC 43067 / DSM 2661 / JAL-1 / JCM 10045 / NBRC 100440) (Methanococcus jannaschii).